A 378-amino-acid polypeptide reads, in one-letter code: Glutamate 5-kinase (378 aa).

Lys19 is a binding site for ATP. Residues Ser59, Asp146, and Asn158 each coordinate substrate. 178 to 179 (TD) provides a ligand contact to ATP. Residues 285–363 (RGSVTVDPGA…SEFEKLLGYT (79 aa)) enclose the PUA domain.

Belongs to the glutamate 5-kinase family.

It localises to the cytoplasm. It catalyses the reaction L-glutamate + ATP = L-glutamyl 5-phosphate + ADP. Its pathway is amino-acid biosynthesis; L-proline biosynthesis; L-glutamate 5-semialdehyde from L-glutamate: step 1/2. Functionally, catalyzes the transfer of a phosphate group to glutamate to form L-glutamate 5-phosphate. The chain is Glutamate 5-kinase from Polaromonas naphthalenivorans (strain CJ2).